The following is a 196-amino-acid chain: MIARTLRTVGRQGRNLLLPRITACRPLHAIPANFSKAYDHDGKTKVTIFNTETDLGLMVTGYSQYGFRLNNDMVLIGPISVFPRSVLSWNVNSFEDINEDSLSLFPTLEPKIDVLIIGIGDQAPPPALSKRIIEFMKKYKINVEILRTEQACATFNFLNAENRMVACALIPPLHLSYNENDILQAKLRKKELYETE.

The transit peptide at 1–93 (MIARTLRTVG…RSVLSWNVNS (93 aa)) directs the protein to the mitochondrion.

It belongs to the NDUFAF3 family. As to quaternary structure, together with NdufAF4 associates with mitochondrial complex I assembly intermediates during its biogenesis.

The protein resides in the mitochondrion. Functionally, involved in the assembly of mitochondrial NADH:ubiquinone oxidoreductase complex (complex I). Together with NdufAF4, involved in biogenesis of complex 1 modules N, Q and P-peripheral, but not the P-distal module. Required for recruitment of the complex I assembly factor Timmdc1 to complex 1 assembly intermediates. The sequence is that of NADH dehydrogenase [ubiquinone] 1 alpha subcomplex assembly factor 3 from Drosophila melanogaster (Fruit fly).